Here is a 508-residue protein sequence, read N- to C-terminus: Putative glycosyl hydrolase ecdF (508 aa).

The first 15 residues, 1 to 15 (MFLHILCLLAGQALA), serve as a signal peptide directing secretion. N-linked (GlcNAc...) asparagine glycans are attached at residues N99, N122, N275, and N362.

The protein belongs to the glycosyl hydrolase 32 family.

The protein is Putative glycosyl hydrolase ecdF of Aspergillus rugulosus (Emericella rugulosa).